The chain runs to 432 residues: Glutamyl-tRNA reductase (432 aa).

Residues threonine 49 to arginine 52, serine 101, glutamate 106 to glutamine 108, and glutamine 112 contribute to the substrate site. The active-site Nucleophile is cysteine 50. Residue glycine 181–isoleucine 186 coordinates NADP(+).

The protein belongs to the glutamyl-tRNA reductase family. Homodimer.

The catalysed reaction is (S)-4-amino-5-oxopentanoate + tRNA(Glu) + NADP(+) = L-glutamyl-tRNA(Glu) + NADPH + H(+). The protein operates within porphyrin-containing compound metabolism; protoporphyrin-IX biosynthesis; 5-aminolevulinate from L-glutamyl-tRNA(Glu): step 1/2. Functionally, catalyzes the NADPH-dependent reduction of glutamyl-tRNA(Glu) to glutamate 1-semialdehyde (GSA). The protein is Glutamyl-tRNA reductase of Xylella fastidiosa (strain M12).